The primary structure comprises 392 residues: NDP-glycosyltransferase YjiC (392 aa).

Residues N18, T229, S255, V278, H293, and 297 to 301 (NSTME) each bind UDP.

This sequence belongs to the UDP-glycosyltransferase family. As to quaternary structure, monomer.

It catalyses the reaction an NDP-glycose + an acceptor = a glycosylated acceptor + NDP.. Activity is improved in the presence of Mn(2+), Mg(2+) and Ca(2+), and inhibited by Ni(2+), Zn(2+) and Cu(2+). In terms of biological role, glycosyltransferase that can glycosylate a wide range of substrates, including various flavonoids, phenyl ketones, curcuminoid, lignins, zingerone, triterpenes, stilbene and anthraquinone, using UDP-glucose or ADP-glucose as sugar donor. It also exhibits O-, N- and S-glycosylation activities towards simple aromatics. In vivo, the broad acceptor tolerance of YjiC might function as a detoxification agent against exogenous xenobiotics to make the strain adaptable to the changeable environment. This chain is NDP-glycosyltransferase YjiC (yjiC), found in Bacillus subtilis (strain 168).